The chain runs to 469 residues: MTTANEVLKQIKENDVKFVDLRFTDPKGKLQHVTMDVVCVDEDMFADGVMFDGSSIGGWKAINESDMVLMPDPETAHMDPFFAQSTMVIFCDILDPVSGEAYNRDPRGTAKKAEAYLKASGIGDTVFVGPEAEFFVFDDVKYKADPYNTGFKLDSSELPSNDDTDYETGNLGHRPRVKGGYFPVPPVDSSQDMRSEMLTVLSEMGVTVEKHHHEVAAAQHELGVKFDALVRNADKMQIYKYVVHQVANAYGKTATFMPKPIFGDNGSGMHVHLSIWKDGKPTFAGDEYAGLSESCLYFIGGIIKHAKALNAFTNPSTNSYKRLVPGYEAPVLLAYSARNRSASCRIPFGTNPKAKRVEVRFPDPTANPYLAFAAMLMAGLDGIKNKLHPGKAMDKDLYDLPPKELKKIPTVCGSLREALESLDKDRKFLTAGGVFDDDQIDSFIELKMQEVMRFEMTPHPVEFDMYYSV.

The GS beta-grasp domain maps to 14 to 99 (NDVKFVDLRF…FCDILDPVSG (86 aa)). A GS catalytic domain is found at 106–469 (PRGTAKKAEA…PVEFDMYYSV (364 aa)). Mg(2+)-binding residues include Glu131 and Glu133. Glu209 is a binding site for ATP. Glu214 and Glu221 together coordinate Mg(2+). L-glutamate-binding positions include 265–266 (NG) and Gly266. Residue His270 participates in Mg(2+) binding. Residues 272 to 274 (HLS) and Ser274 each bind ATP. Positions 322, 328, and 340 each coordinate L-glutamate. Residues Arg340, Arg345, and Lys353 each coordinate ATP. Mg(2+) is bound at residue Glu358. An L-glutamate-binding site is contributed by Arg360. Tyr398 carries the O-AMP-tyrosine modification.

The protein belongs to the glutamine synthetase family. Oligomer of 12 subunits arranged in the form of two hexameric ring. Requires Mg(2+) as cofactor.

Its subcellular location is the cytoplasm. It carries out the reaction L-glutamate + NH4(+) + ATP = L-glutamine + ADP + phosphate + H(+). Its activity is regulated as follows. The activity of this enzyme could be controlled by adenylation under conditions of abundant glutamine. Its function is as follows. Catalyzes the ATP-dependent biosynthesis of glutamine from glutamate and ammonia. This is Glutamine synthetase from Rhizobium meliloti (strain 1021) (Ensifer meliloti).